The following is a 183-amino-acid chain: DLKAGGKNKKTKRTSPKSNDIYLKLLVKLYRFLVRRTDSNFNAVILKRLFMSKVNRPPLSLSRLIKYMQGKEGKIGVVVGAVTDDIRVYDVPTIKVTALKFTETARARIQKAGGECLTFDQLALRLPLTDTVLLRGPKNAREAVKHFGPAPGVPHSHTKPYVRSKGRKFEKARGRRKSRGFRV.

A disordered region spans residues His-146 to Val-183. 2 stretches are compositionally biased toward basic residues: residues Ser-156–Gly-166 and Arg-173–Val-183.

This sequence belongs to the eukaryotic ribosomal protein eL18 family.

The protein is Large ribosomal subunit protein eL18 (RPL18) of Cicer arietinum (Chickpea).